A 268-amino-acid chain; its full sequence is Cyclohexadienyl dehydratase (268 aa).

Positions 1–25 are cleaved as a signal peptide; the sequence is MPKSFRHLVQALACLALLASASLQA.

It belongs to the bacterial solute-binding protein 3 family. As to quaternary structure, homodimer.

It localises to the periplasm. It catalyses the reaction prephenate + H(+) = 3-phenylpyruvate + CO2 + H2O. The enzyme catalyses L-arogenate + H(+) = L-phenylalanine + CO2 + H2O. It functions in the pathway amino-acid biosynthesis; L-phenylalanine biosynthesis; L-phenylalanine from L-arogenate: step 1/1. Its pathway is amino-acid biosynthesis; L-phenylalanine biosynthesis; phenylpyruvate from prephenate: step 1/1. In terms of biological role, forms alternative pathway for phenylalanine biosynthesis. Can catalyze two reactions: prephenate dehydratase and arogenate dehydratase. May have a role in chemotaxis or transport. This is Cyclohexadienyl dehydratase (pheC) from Pseudomonas aeruginosa (strain ATCC 15692 / DSM 22644 / CIP 104116 / JCM 14847 / LMG 12228 / 1C / PRS 101 / PAO1).